The primary structure comprises 154 residues: Sec-independent protein translocase protein TatB (154 aa).

The helical transmembrane segment at Met-1 to Gly-21 threads the bilayer.

The protein belongs to the TatB family. The Tat system comprises two distinct complexes: a TatABC complex, containing multiple copies of TatA, TatB and TatC subunits, and a separate TatA complex, containing only TatA subunits. Substrates initially bind to the TatABC complex, which probably triggers association of the separate TatA complex to form the active translocon.

The protein resides in the cell inner membrane. Its function is as follows. Part of the twin-arginine translocation (Tat) system that transports large folded proteins containing a characteristic twin-arginine motif in their signal peptide across membranes. Together with TatC, TatB is part of a receptor directly interacting with Tat signal peptides. TatB may form an oligomeric binding site that transiently accommodates folded Tat precursor proteins before their translocation. The polypeptide is Sec-independent protein translocase protein TatB (Albidiferax ferrireducens (strain ATCC BAA-621 / DSM 15236 / T118) (Rhodoferax ferrireducens)).